Reading from the N-terminus, the 194-residue chain is ATP synthase subunit 5, mitochondrial (194 aa).

F-type ATP synthases have 2 components, the catalytic core F(1) and the membrane-embedded component F(0), linked together by a central stalk and a peripheral stalk. The central stalk, also called rotor shaft, is often seen as part of F(1). The peripheral stalk is seen as part of F(0). F(0) contains the membrane channel next to the rotor. F-type ATP synthases form dimers but each monomer functions independently in ATP generation. The dimer consists of 18 different polypeptides: ATP1 (subunit alpha, part of F(1), 3 molecules per monomer), ATP2 (subunit beta, part of F(1), 3 molecules per monomer), ATP3 (subunit gamma, part of the central stalk), ATP4 (subunit b, part of the peripheral stalk), ATP5/OSCP (subunit 5/OSCP, part of the peripheral stalk), ATP6 (subunit a, part of the peripheral stalk), ATP7 (subunit d, part of the peripheral stalk), ATP8 (subunit 8, part of the peripheral stalk), OLI1 (subunit c, part of the rotor, 10 molecules per monomer), ATP14 (subunit h, part of the peripheral stalk), ATP15 (subunit epsilon, part of the central stalk), ATP16 (subunit delta, part of the central stalk), ATP17 (subunit f, part of the peripheral stalk), ATP18 (subunit i/j, part of the peripheral stalk). Dimer-specific subunits are ATP19 (subunit k, at interface between monomers), ATP20 (subunit g, at interface between monomers), TIM11 (subunit e, at interface between monomers). Also contains subunit L.

It localises to the mitochondrion inner membrane. Its function is as follows. Mitochondrial membrane ATP synthase (F(1)F(0) ATP synthase or Complex V) produces ATP from ADP in the presence of a proton gradient across the membrane which is generated by electron transport complexes of the respiratory chain. F-type ATP synthases consist of two structural domains, F(1) - containing the extramembraneous catalytic core, and F(0) - containing the membrane proton channel, linked together by a central stalk and a peripheral stalk. During catalysis, ATP synthesis in the catalytic domain of F(1) is coupled via a rotary mechanism of the central stalk subunits to proton translocation. Part of the complex F(0) domain and the peripheral stalk, which acts as a stator to hold the catalytic alpha/ATP1(3)beta/ATP2(3) subcomplex and subunit a/ATP6 static relative to the rotary elements. In Pichia angusta (Yeast), this protein is ATP synthase subunit 5, mitochondrial.